A 440-amino-acid chain; its full sequence is Chorismate synthase 1, chloroplastic (440 aa).

The transit peptide at methionine 1 to alanine 54 directs the protein to the chloroplast. The disordered stretch occupies residues arginine 100–aspartate 147. The span at cysteine 118 to serine 132 shows a compositional bias: polar residues.

This sequence belongs to the chorismate synthase family. Homotetramer. The cofactor is FMNH2. In terms of tissue distribution, predominantly expressed in flowers and roots and, to a lesser extent, in stems, leaves, and cotyledons.

Its subcellular location is the plastid. The protein resides in the chloroplast. It catalyses the reaction 5-O-(1-carboxyvinyl)-3-phosphoshikimate = chorismate + phosphate. The protein operates within metabolic intermediate biosynthesis; chorismate biosynthesis; chorismate from D-erythrose 4-phosphate and phosphoenolpyruvate: step 7/7. Functionally, catalyzes the last common step of the biosynthesis of aromatic amino acids, produced via the shikimic acid pathway. The chain is Chorismate synthase 1, chloroplastic (CS1) from Solanum lycopersicum (Tomato).